The sequence spans 271 residues: Neurexophilin-1 (271 aa).

Positions 1–21 (MQAACWYVLLLLQPTVYLVTC) are cleaved as a signal peptide. The II stretch occupies residues 22–97 (ANLTNGGKSE…WDWLRNSTDL (76 aa)). Asparagine 23, asparagine 68, asparagine 93, asparagine 146, asparagine 156, and asparagine 162 each carry an N-linked (GlcNAc...) asparagine glycan. Residues 98–176 (QEPRPRAKRR…LVPPTKIVEF (79 aa)) form an III region. The segment at 177–185 (DLAQQTVID) is IV (linker domain). The v (Cys-rich) stretch occupies residues 186–271 (AKDSKSFNCR…HSDTPYFPSG (86 aa)).

Belongs to the neurexophilin family. Post-translationally, may be proteolytically processed at the boundary between the N-terminal non-conserved and the central conserved domain in neuron-like cells. As to expression, highest level in brain.

It localises to the secreted. Functionally, may be signaling molecules that resemble neuropeptides. Ligand for alpha-neurexins. The sequence is that of Neurexophilin-1 (Nxph1) from Rattus norvegicus (Rat).